Consider the following 699-residue polypeptide: Tectonic-like complex member Mks1 (699 aa).

2 disordered regions span residues 101–121 (RRSP…EGEI) and 373–396 (DGFS…IEED). The segment covering 108–119 (HEGEMEKDKNEG) has biased composition (basic and acidic residues). The 127-residue stretch at 434–560 (KRVSLLLELQ…RLQCIRPLGN (127 aa)) folds into the C2 B9-type domain. Residues 632 to 661 (LELGNDSSDDGDSNDDDVRSSSNPDTSRAT) are disordered.

Probable component of the tectonic-like complex (also named MKS complex), composed of B9d1, B9d2, Cc2d2a, Mks1 and tctn. In terms of tissue distribution, expressed in chordotonal neurons in the antennae (at protein level). Expressed in spermatids (at protein level).

The protein localises to the cytoplasm. Its subcellular location is the cytoskeleton. The protein resides in the cilium basal body. It localises to the microtubule organizing center. It is found in the centrosome. The protein localises to the centriole. Probable component of the tectonic-like complex (also named MKS complex), a complex localized at the transition zone of primary cilia. Required for ciliary structure and function. The sequence is that of Tectonic-like complex member Mks1 from Drosophila melanogaster (Fruit fly).